Reading from the N-terminus, the 358-residue chain is Alanine racemase (358 aa).

Lysine 35 acts as the Proton acceptor; specific for D-alanine in catalysis. At lysine 35 the chain carries N6-(pyridoxal phosphate)lysine. Arginine 130 provides a ligand contact to substrate. Tyrosine 255 serves as the catalytic Proton acceptor; specific for L-alanine. Position 303 (methionine 303) interacts with substrate.

This sequence belongs to the alanine racemase family. Pyridoxal 5'-phosphate is required as a cofactor.

The enzyme catalyses L-alanine = D-alanine. It functions in the pathway amino-acid biosynthesis; D-alanine biosynthesis; D-alanine from L-alanine: step 1/1. Its function is as follows. Catalyzes the interconversion of L-alanine and D-alanine. May also act on other amino acids. This Shewanella woodyi (strain ATCC 51908 / MS32) protein is Alanine racemase (alr).